The sequence spans 97 residues: Putative CC-type chemokine U83 (97 aa).

Disulfide bonds link C32–C62 and C33–C76.

It belongs to the intercrine beta (chemokine CC) family. Highly divergent.

This chain is Putative CC-type chemokine U83 (U83), found in Homo sapiens (Human).